The sequence spans 416 residues: Kynureninase (416 aa).

Residues threonine 97, serine 98, phenylalanine 129 to aspartate 132, threonine 172, aspartate 201, histidine 204, and tyrosine 226 each bind pyridoxal 5'-phosphate. Lysine 227 is subject to N6-(pyridoxal phosphate)lysine. Residues tryptophan 256 and threonine 282 each coordinate pyridoxal 5'-phosphate.

It belongs to the kynureninase family. Homodimer. Requires pyridoxal 5'-phosphate as cofactor.

The catalysed reaction is L-kynurenine + H2O = anthranilate + L-alanine + H(+). It catalyses the reaction 3-hydroxy-L-kynurenine + H2O = 3-hydroxyanthranilate + L-alanine + H(+). Its pathway is amino-acid degradation; L-kynurenine degradation; L-alanine and anthranilate from L-kynurenine: step 1/1. The protein operates within cofactor biosynthesis; NAD(+) biosynthesis; quinolinate from L-kynurenine: step 2/3. Functionally, catalyzes the cleavage of L-kynurenine (L-Kyn) and L-3-hydroxykynurenine (L-3OHKyn) into anthranilic acid (AA) and 3-hydroxyanthranilic acid (3-OHAA), respectively. This Pseudomonas fluorescens protein is Kynureninase.